A 364-amino-acid chain; its full sequence is DNA primase large subunit PriL (364 aa).

The [4Fe-4S] cluster site is built by C237, C309, C318, and C325. The interval 345–364 (MQNDNEKGHEEKKEGETPPQ) is disordered.

It belongs to the eukaryotic-type primase large subunit family. In terms of assembly, heterodimer of a small subunit (PriS) and a large subunit (PriL). It depends on [4Fe-4S] cluster as a cofactor.

In terms of biological role, regulatory subunit of DNA primase, an RNA polymerase that catalyzes the synthesis of short RNA molecules used as primers for DNA polymerase during DNA replication. Stabilizes and modulates the activity of the small subunit, increasing the rate of DNA synthesis, and conferring RNA synthesis capability. The DNA polymerase activity may enable DNA primase to also catalyze primer extension after primer synthesis. May also play a role in DNA repair. The protein is DNA primase large subunit PriL of Methanococcoides burtonii (strain DSM 6242 / NBRC 107633 / OCM 468 / ACE-M).